The following is a 112-amino-acid chain: Large ribosomal subunit protein uL24 (112 aa).

Residues Glu-92–Leu-112 form a disordered region.

This sequence belongs to the universal ribosomal protein uL24 family. Part of the 50S ribosomal subunit.

Its function is as follows. One of two assembly initiator proteins, it binds directly to the 5'-end of the 23S rRNA, where it nucleates assembly of the 50S subunit. In terms of biological role, one of the proteins that surrounds the polypeptide exit tunnel on the outside of the subunit. The chain is Large ribosomal subunit protein uL24 from Kocuria rhizophila (strain ATCC 9341 / DSM 348 / NBRC 103217 / DC2201).